A 107-amino-acid polypeptide reads, in one-letter code: Phosphoribosyl-ATP pyrophosphatase (107 aa).

It belongs to the PRA-PH family.

The protein localises to the cytoplasm. It carries out the reaction 1-(5-phospho-beta-D-ribosyl)-ATP + H2O = 1-(5-phospho-beta-D-ribosyl)-5'-AMP + diphosphate + H(+). The protein operates within amino-acid biosynthesis; L-histidine biosynthesis; L-histidine from 5-phospho-alpha-D-ribose 1-diphosphate: step 2/9. This chain is Phosphoribosyl-ATP pyrophosphatase, found in Bacillus cereus (strain AH187).